The sequence spans 137 residues: Ribosome-binding factor A (137 aa).

The protein belongs to the RbfA family. In terms of assembly, monomer. Binds 30S ribosomal subunits, but not 50S ribosomal subunits or 70S ribosomes.

The protein resides in the cytoplasm. In terms of biological role, one of several proteins that assist in the late maturation steps of the functional core of the 30S ribosomal subunit. Associates with free 30S ribosomal subunits (but not with 30S subunits that are part of 70S ribosomes or polysomes). Required for efficient processing of 16S rRNA. May interact with the 5'-terminal helix region of 16S rRNA. The chain is Ribosome-binding factor A from Rhodopseudomonas palustris (strain TIE-1).